Consider the following 309-residue polypeptide: Ornithine carbamoyltransferase (309 aa).

Residues 51 to 54 (STRT), Q78, R102, and 129 to 132 (HPVQ) each bind carbamoyl phosphate. Residues N159, D223, and 227 to 228 (SM) each bind L-ornithine. Carbamoyl phosphate contacts are provided by residues 263–264 (CL) and R291.

The protein belongs to the aspartate/ornithine carbamoyltransferase superfamily. OTCase family.

It localises to the cytoplasm. It carries out the reaction carbamoyl phosphate + L-ornithine = L-citrulline + phosphate + H(+). It participates in amino-acid biosynthesis; L-arginine biosynthesis; L-arginine from L-ornithine and carbamoyl phosphate: step 1/3. Its function is as follows. Reversibly catalyzes the transfer of the carbamoyl group from carbamoyl phosphate (CP) to the N(epsilon) atom of ornithine (ORN) to produce L-citrulline. The chain is Ornithine carbamoyltransferase from Nitratiruptor sp. (strain SB155-2).